The chain runs to 257 residues: Uracil phosphoribosyltransferase homolog (257 aa).

Residues R81, R90, and 124-127 contribute to the GTP site; that span reads EKGN. Residue R134 participates in 5-phospho-alpha-D-ribose 1-diphosphate binding. R151 and R180 together coordinate GTP. 186-194 provides a ligand contact to 5-phospho-alpha-D-ribose 1-diphosphate; the sequence is YPILSTGNT. Position 247–249 (247–249) interacts with uracil; sequence THF.

It belongs to the UPRTase family.

The protein localises to the cytoplasm. It localises to the nucleus. The polypeptide is Uracil phosphoribosyltransferase homolog (uprt) (Danio rerio (Zebrafish)).